We begin with the raw amino-acid sequence, 137 residues long: MVKLGFVIAEFNRDLTFMMEKLAEEHAAFLGADVSCKVMVPGSFDMPLAIKTLLQKDDIDAVVTIGCVIEGDTEHDEIVVQNAARKIADLSLEFGKPVALGIAGPGMTRMQAEDRIDYGKNAVEAAVKMVKRLKEIQ.

Residues Phe11, 43–45 (SFD), and 67–69 (CVI) contribute to the 5-amino-6-(D-ribitylamino)uracil site. 72 to 73 (DT) contacts (2S)-2-hydroxy-3-oxobutyl phosphate. His75 acts as the Proton donor in catalysis. Leu100 contributes to the 5-amino-6-(D-ribitylamino)uracil binding site. A (2S)-2-hydroxy-3-oxobutyl phosphate-binding site is contributed by Arg115.

Belongs to the DMRL synthase family. In terms of assembly, forms an icosahedral capsid composed of 60 subunits, arranged as a dodecamer of pentamers.

It catalyses the reaction (2S)-2-hydroxy-3-oxobutyl phosphate + 5-amino-6-(D-ribitylamino)uracil = 6,7-dimethyl-8-(1-D-ribityl)lumazine + phosphate + 2 H2O + H(+). It participates in cofactor biosynthesis; riboflavin biosynthesis; riboflavin from 2-hydroxy-3-oxobutyl phosphate and 5-amino-6-(D-ribitylamino)uracil: step 1/2. Catalyzes the formation of 6,7-dimethyl-8-ribityllumazine by condensation of 5-amino-6-(D-ribitylamino)uracil with 3,4-dihydroxy-2-butanone 4-phosphate. This is the penultimate step in the biosynthesis of riboflavin. The protein is 6,7-dimethyl-8-ribityllumazine synthase of Methanococcus maripaludis (strain C5 / ATCC BAA-1333).